The primary structure comprises 705 residues: Catalase C (705 aa).

Residues 1 to 31 form a disordered region; the sequence is MAKKPSAPNNTKPATIHDQKATRGNGGELHQ. Catalysis depends on residues histidine 88 and asparagine 161. Tyrosine 375 contributes to the heme binding site.

Belongs to the catalase family. HPII subfamily. Heme is required as a cofactor.

It carries out the reaction 2 H2O2 = O2 + 2 H2O. Decomposes hydrogen peroxide into water and oxygen; serves to protect cells from the toxic effects of hydrogen peroxide. Could protect cells in nodules which have a high potential to produce hydrogen peroxide because of the strong reducing conditions required for nitrogen fixation and the action of several proteins. In Rhizobium meliloti (strain 1021) (Ensifer meliloti), this protein is Catalase C (katE).